We begin with the raw amino-acid sequence, 276 residues long: Undecaprenyl-diphosphatase (276 aa).

A run of 6 helical transmembrane segments spans residues 43 to 63 (RAMA…VWEF), 85 to 105 (GNLL…ADLI), 109 to 129 (LFNP…MLWA), 183 to 203 (AATE…AVYS), 214 to 234 (GDLP…MIAV), and 249 to 269 (FAWY…FGWV).

Belongs to the UppP family.

It localises to the cell inner membrane. The catalysed reaction is di-trans,octa-cis-undecaprenyl diphosphate + H2O = di-trans,octa-cis-undecaprenyl phosphate + phosphate + H(+). In terms of biological role, catalyzes the dephosphorylation of undecaprenyl diphosphate (UPP). Confers resistance to bacitracin. The chain is Undecaprenyl-diphosphatase from Pseudomonas putida (strain ATCC 700007 / DSM 6899 / JCM 31910 / BCRC 17059 / LMG 24140 / F1).